Consider the following 109-residue polypeptide: ATP synthase subunit c (109 aa).

The next 2 membrane-spanning stretches (helical) occupy residues 42–62 (YIGT…QGFS) and 88–108 (LALA…IIFV).

This sequence belongs to the ATPase C chain family. As to quaternary structure, F-type ATPases have 2 components, F(1) - the catalytic core - and F(0) - the membrane proton channel. F(1) has five subunits: alpha(3), beta(3), gamma(1), delta(1), epsilon(1). F(0) has three main subunits: a(1), b(2) and c(10-14). The alpha and beta chains form an alternating ring which encloses part of the gamma chain. F(1) is attached to F(0) by a central stalk formed by the gamma and epsilon chains, while a peripheral stalk is formed by the delta and b chains.

It localises to the cell membrane. Functionally, f(1)F(0) ATP synthase produces ATP from ADP in the presence of a proton or sodium gradient. F-type ATPases consist of two structural domains, F(1) containing the extramembraneous catalytic core and F(0) containing the membrane proton channel, linked together by a central stalk and a peripheral stalk. During catalysis, ATP synthesis in the catalytic domain of F(1) is coupled via a rotary mechanism of the central stalk subunits to proton translocation. Its function is as follows. Key component of the F(0) channel; it plays a direct role in translocation across the membrane. A homomeric c-ring of between 10-14 subunits forms the central stalk rotor element with the F(1) delta and epsilon subunits. The protein is ATP synthase subunit c of Ureaplasma urealyticum serovar 10 (strain ATCC 33699 / Western).